A 121-amino-acid polypeptide reads, in one-letter code: uncharacterized protein (121 aa).

Residues 101–121 (TVVKKEDVRESPVDTFMENAT) are disordered. Residues 102–112 (VVKKEDVRESP) are compositionally biased toward basic and acidic residues.

This is an uncharacterized protein from Schizosaccharomyces pombe (strain 972 / ATCC 24843) (Fission yeast).